The chain runs to 817 residues: Actin filament-associated protein 1-like 2 (817 aa).

Y56 bears the Phosphotyrosine mark. The disordered stretch occupies residues 63 to 164; sequence HKQQNAESQD…KGKSAPHQWP (102 aa). Over residues 123-139 the composition is skewed to acidic residues; the sequence is YYEEAEPYDTSLNEDGE. PH domains lie at 175–271 and 353–447; these read DARI…EVSG and SLET…SESG. At S408 the chain carries Phosphoserine. Y413 carries the post-translational modification Phosphotyrosine. At S484 the chain carries Phosphoserine. Over residues 512 to 528 the composition is skewed to low complexity; it reads TTAGEAPEEATPATDAP. 2 disordered regions span residues 512–657 and 754–786; these read TTAG…KLGK and GTTV…VNSA. The stretch at 652–748 forms a coiled coil; that stretch reads EIKLGKNRTE…VKDSLRKAEA (97 aa). Over residues 754-763 the composition is skewed to polar residues; sequence GTTVDTTHLE. Residues 767 to 782 are compositionally biased toward low complexity; that stretch reads PRPKAATPTPAPDCTP.

In terms of assembly, interacts with SRC. Interacts with LCK when tyrosine phosphorylated. In terms of processing, tyrosine phosphorylated (by SRC).

It localises to the cytoplasm. Functionally, may play a role in a signaling cascade by enhancing the kinase activity of SRC. Contributes to SRC-regulated transcription activation. The chain is Actin filament-associated protein 1-like 2 (AFAP1L2) from Bos taurus (Bovine).